Consider the following 120-residue polypeptide: UPF0231 protein ETA_08290 (120 aa).

This sequence belongs to the UPF0231 family.

The sequence is that of UPF0231 protein ETA_08290 from Erwinia tasmaniensis (strain DSM 17950 / CFBP 7177 / CIP 109463 / NCPPB 4357 / Et1/99).